Reading from the N-terminus, the 230-residue chain is Phosphatidylserine decarboxylase proenzyme (230 aa).

Residue S186 is the Schiff-base intermediate with substrate; via pyruvic acid of the active site. S186 is subject to Pyruvic acid (Ser); by autocatalysis.

It belongs to the phosphatidylserine decarboxylase family. PSD-A subfamily. As to quaternary structure, heterodimer of a large membrane-associated beta subunit and a small pyruvoyl-containing alpha subunit. Pyruvate is required as a cofactor. Is synthesized initially as an inactive proenzyme. Formation of the active enzyme involves a self-maturation process in which the active site pyruvoyl group is generated from an internal serine residue via an autocatalytic post-translational modification. Two non-identical subunits are generated from the proenzyme in this reaction, and the pyruvate is formed at the N-terminus of the alpha chain, which is derived from the carboxyl end of the proenzyme. The post-translation cleavage follows an unusual pathway, termed non-hydrolytic serinolysis, in which the side chain hydroxyl group of the serine supplies its oxygen atom to form the C-terminus of the beta chain, while the remainder of the serine residue undergoes an oxidative deamination to produce ammonia and the pyruvoyl prosthetic group on the alpha chain.

The protein localises to the cell membrane. It carries out the reaction a 1,2-diacyl-sn-glycero-3-phospho-L-serine + H(+) = a 1,2-diacyl-sn-glycero-3-phosphoethanolamine + CO2. Its pathway is phospholipid metabolism; phosphatidylethanolamine biosynthesis; phosphatidylethanolamine from CDP-diacylglycerol: step 2/2. Its function is as follows. Catalyzes the formation of phosphatidylethanolamine (PtdEtn) from phosphatidylserine (PtdSer). The chain is Phosphatidylserine decarboxylase proenzyme from Wolbachia sp. subsp. Brugia malayi (strain TRS).